Here is a 328-residue protein sequence, read N- to C-terminus: Ketol-acid reductoisomerase (NADP(+)) (328 aa).

The KARI N-terminal Rossmann domain maps to 1–181 (MKIYYENDID…GLARAGVLET (181 aa)). NADP(+) contacts are provided by residues 24–27 (YGSQ), R47, S52, and 82–85 (DEIQ). The active site involves H107. G133 is a binding site for NADP(+). The 146-residue stretch at 182 to 327 (TFREETETDL…SKLRKLCGLE (146 aa)) folds into the KARI C-terminal knotted domain. D190, E194, E226, and E230 together coordinate Mg(2+). Substrate is bound at residue S251.

It belongs to the ketol-acid reductoisomerase family. Mg(2+) serves as cofactor.

It carries out the reaction (2R)-2,3-dihydroxy-3-methylbutanoate + NADP(+) = (2S)-2-acetolactate + NADPH + H(+). It catalyses the reaction (2R,3R)-2,3-dihydroxy-3-methylpentanoate + NADP(+) = (S)-2-ethyl-2-hydroxy-3-oxobutanoate + NADPH + H(+). Its pathway is amino-acid biosynthesis; L-isoleucine biosynthesis; L-isoleucine from 2-oxobutanoate: step 2/4. It functions in the pathway amino-acid biosynthesis; L-valine biosynthesis; L-valine from pyruvate: step 2/4. Functionally, involved in the biosynthesis of branched-chain amino acids (BCAA). Catalyzes an alkyl-migration followed by a ketol-acid reduction of (S)-2-acetolactate (S2AL) to yield (R)-2,3-dihydroxy-isovalerate. In the isomerase reaction, S2AL is rearranged via a Mg-dependent methyl migration to produce 3-hydroxy-3-methyl-2-ketobutyrate (HMKB). In the reductase reaction, this 2-ketoacid undergoes a metal-dependent reduction by NADPH to yield (R)-2,3-dihydroxy-isovalerate. This Methanothermobacter thermautotrophicus (strain ATCC 29096 / DSM 1053 / JCM 10044 / NBRC 100330 / Delta H) (Methanobacterium thermoautotrophicum) protein is Ketol-acid reductoisomerase (NADP(+)).